A 229-amino-acid chain; its full sequence is Trypsin (229 aa).

Residues 1–7 constitute a propeptide, activation peptide; the sequence is APDDDDK. The Peptidase S1 domain maps to 8–227; sequence IVGGYECPKH…YVSWIHETIA (220 aa). Intrachain disulfides connect Cys14–Cys143, Cys32–Cys48, Cys116–Cys216, Cys123–Cys189, Cys154–Cys168, and Cys179–Cys203. The Charge relay system role is filled by His47. The Ca(2+) site is built by Glu59 and Glu69. Residue Asp91 is the Charge relay system of the active site. Ser183 acts as the Charge relay system in catalysis.

Belongs to the peptidase S1 family. Ca(2+) is required as a cofactor.

The protein resides in the secreted. It localises to the extracellular space. It catalyses the reaction Preferential cleavage: Arg-|-Xaa, Lys-|-Xaa.. In Squalus acanthias (Spiny dogfish), this protein is Trypsin.